Consider the following 593-residue polypeptide: Isocitrate dehydrogenase kinase/phosphatase (593 aa).

Residues 315-321 (APGIRGM) and Lys336 contribute to the ATP site. The active site involves Asp371.

It belongs to the AceK family.

The protein localises to the cytoplasm. The catalysed reaction is L-seryl-[isocitrate dehydrogenase] + ATP = O-phospho-L-seryl-[isocitrate dehydrogenase] + ADP + H(+). Functionally, bifunctional enzyme which can phosphorylate or dephosphorylate isocitrate dehydrogenase (IDH) on a specific serine residue. This is a regulatory mechanism which enables bacteria to bypass the Krebs cycle via the glyoxylate shunt in response to the source of carbon. When bacteria are grown on glucose, IDH is fully active and unphosphorylated, but when grown on acetate or ethanol, the activity of IDH declines drastically concomitant with its phosphorylation. In Salmonella typhi, this protein is Isocitrate dehydrogenase kinase/phosphatase.